The sequence spans 520 residues: GMP synthase [glutamine-hydrolyzing] (520 aa).

In terms of domain architecture, Glutamine amidotransferase type-1 spans R8 to D202. The active-site Nucleophile is the C86. Active-site residues include H177 and E179. In terms of domain architecture, GMPS ATP-PPase spans W203–R395. S230–S236 is an ATP binding site.

As to quaternary structure, homodimer.

The catalysed reaction is XMP + L-glutamine + ATP + H2O = GMP + L-glutamate + AMP + diphosphate + 2 H(+). The protein operates within purine metabolism; GMP biosynthesis; GMP from XMP (L-Gln route): step 1/1. Its function is as follows. Catalyzes the synthesis of GMP from XMP. This is GMP synthase [glutamine-hydrolyzing] from Dinoroseobacter shibae (strain DSM 16493 / NCIMB 14021 / DFL 12).